Reading from the N-terminus, the 95-residue chain is Protein TusB (95 aa).

It belongs to the DsrH/TusB family. As to quaternary structure, heterohexamer, formed by a dimer of trimers. The hexameric TusBCD complex contains 2 copies each of TusB, TusC and TusD. The TusBCD complex interacts with TusE.

It is found in the cytoplasm. Functionally, part of a sulfur-relay system required for 2-thiolation of 5-methylaminomethyl-2-thiouridine (mnm(5)s(2)U) at tRNA wobble positions. The sequence is that of Protein TusB from Escherichia fergusonii (strain ATCC 35469 / DSM 13698 / CCUG 18766 / IAM 14443 / JCM 21226 / LMG 7866 / NBRC 102419 / NCTC 12128 / CDC 0568-73).